Here is a 494-residue protein sequence, read N- to C-terminus: Guanosine-5'-triphosphate,3'-diphosphate pyrophosphatase (494 aa).

The protein belongs to the GppA/Ppx family. GppA subfamily.

It carries out the reaction guanosine 3'-diphosphate 5'-triphosphate + H2O = guanosine 3',5'-bis(diphosphate) + phosphate + H(+). It participates in purine metabolism; ppGpp biosynthesis; ppGpp from GTP: step 2/2. Catalyzes the conversion of pppGpp to ppGpp. Guanosine pentaphosphate (pppGpp) is a cytoplasmic signaling molecule which together with ppGpp controls the 'stringent response', an adaptive process that allows bacteria to respond to amino acid starvation, resulting in the coordinated regulation of numerous cellular activities. The polypeptide is Guanosine-5'-triphosphate,3'-diphosphate pyrophosphatase (Shigella dysenteriae serotype 1 (strain Sd197)).